A 448-amino-acid polypeptide reads, in one-letter code: NADH oxidase (448 aa).

Residues 7 to 11 (GSGAA), cysteine 42, valine 80, 110 to 113 (ATGA), and arginine 132 each bind FAD. Cysteine 42 serves as the catalytic Redox-active. Residues 152–167 (VAVV…MAYG), glutamate 179, and glycine 243 contribute to the NAD(+) site. FAD-binding positions include 271 to 281 (TSIPNIYAVGD), glycine 299, and threonine 300. Valine 328 is an NAD(+) binding site. Tyrosine 423 contacts FAD.

This sequence belongs to the class-III pyridine nucleotide-disulfide oxidoreductase family. FAD is required as a cofactor.

It catalyses the reaction 2 NADH + O2 + 2 H(+) = 2 NAD(+) + 2 H2O. In terms of biological role, catalyzes the four-electron reduction of molecular oxygen to water. This chain is NADH oxidase, found in Methanocaldococcus jannaschii (strain ATCC 43067 / DSM 2661 / JAL-1 / JCM 10045 / NBRC 100440) (Methanococcus jannaschii).